The sequence spans 167 residues: Ribosome maturation factor RimM (167 aa).

The PRC barrel domain occupies 93-165 (KGVYYDFQLI…QVIIDPIPGL (73 aa)).

Belongs to the RimM family. As to quaternary structure, binds ribosomal protein uS19.

Its subcellular location is the cytoplasm. An accessory protein needed during the final step in the assembly of 30S ribosomal subunit, possibly for assembly of the head region. Essential for efficient processing of 16S rRNA. May be needed both before and after RbfA during the maturation of 16S rRNA. It has affinity for free ribosomal 30S subunits but not for 70S ribosomes. The sequence is that of Ribosome maturation factor RimM from Dehalococcoides mccartyi (strain ATCC BAA-2266 / KCTC 15142 / 195) (Dehalococcoides ethenogenes (strain 195)).